Here is an 82-residue protein sequence, read N- to C-terminus: Small ribosomal subunit protein uS17 (82 aa).

The protein belongs to the universal ribosomal protein uS17 family. In terms of assembly, part of the 30S ribosomal subunit.

In terms of biological role, one of the primary rRNA binding proteins, it binds specifically to the 5'-end of 16S ribosomal RNA. This chain is Small ribosomal subunit protein uS17, found in Shewanella woodyi (strain ATCC 51908 / MS32).